The primary structure comprises 461 residues: Acetylornithine aminotransferase, mitochondrial (461 aa).

A disordered region spans residues 36–56 (YATASQLTHPDPTEDSPSGKM). Residue K312 is modified to N6-(pyridoxal phosphate)lysine.

The protein belongs to the class-III pyridoxal-phosphate-dependent aminotransferase family. Pyridoxal 5'-phosphate is required as a cofactor.

The protein localises to the mitochondrion matrix. It carries out the reaction N(2)-acetyl-L-ornithine + 2-oxoglutarate = N-acetyl-L-glutamate 5-semialdehyde + L-glutamate. Its pathway is amino-acid biosynthesis; L-arginine biosynthesis; N(2)-acetyl-L-ornithine from L-glutamate: step 4/4. The protein is Acetylornithine aminotransferase, mitochondrial (arg-8) of Neurospora crassa (strain ATCC 24698 / 74-OR23-1A / CBS 708.71 / DSM 1257 / FGSC 987).